The sequence spans 91 residues: UPF0386 protein CC_0226 (91 aa).

The protein belongs to the UPF0386 family.

The sequence is that of UPF0386 protein CC_0226 from Caulobacter vibrioides (strain ATCC 19089 / CIP 103742 / CB 15) (Caulobacter crescentus).